Here is a 491-residue protein sequence, read N- to C-terminus: PE-PGRS family protein PE_PGRS26 (491 aa).

The PE domain occupies 1-93; sequence MSNVMVVPGM…VGSYAAAEAA (93 aa). 2 stretches are compositionally biased toward gly residues: residues 207 to 221 and 229 to 238; these read NGGT…GGGL and GGNGGGGDAG. Disordered regions lie at residues 207–238, 255–275, and 444–491; these read NGGT…GDAG, DGGA…ARGG, and AGGN…GKHG. Residues 444 to 485 are compositionally biased toward gly residues; sequence AGGNGGDGGPSQGGGNPGFGGDGGTGGPGGVGVPDGIGGANG.

It belongs to the mycobacterial PE family. PGRS subfamily.

Its subcellular location is the cell surface. This chain is PE-PGRS family protein PE_PGRS26, found in Mycobacterium tuberculosis (strain ATCC 25618 / H37Rv).